The chain runs to 147 residues: Hemoglobin subunit epsilon-2 (147 aa).

In terms of domain architecture, Globin spans His-3–His-147. Residues Tyr-64 and His-93 each coordinate heme b.

Belongs to the globin family. As to expression, red blood cells.

Hemoglobin epsilon chain is a beta-type chain found in early embryos. This Bos taurus (Bovine) protein is Hemoglobin subunit epsilon-2 (HBE2).